Reading from the N-terminus, the 137-residue chain is Small ribosomal subunit protein uS11 (137 aa).

Residues 1-11 (MAKQAKAGAAR) are compositionally biased toward low complexity. The segment at 1 to 32 (MAKQAKAGAARRPQRGRRRERKNVPRGQAHVQ) is disordered. A compositionally biased stretch (basic residues) spans 12-21 (RPQRGRRRER).

The protein belongs to the universal ribosomal protein uS11 family. Part of the 30S ribosomal subunit. Interacts with proteins S7 and S18. Binds to IF-3.

Located on the platform of the 30S subunit, it bridges several disparate RNA helices of the 16S rRNA. Forms part of the Shine-Dalgarno cleft in the 70S ribosome. In Herpetosiphon aurantiacus (strain ATCC 23779 / DSM 785 / 114-95), this protein is Small ribosomal subunit protein uS11.